The chain runs to 107 residues: Nucleoid-associated protein amb4104 (107 aa).

This sequence belongs to the YbaB/EbfC family. In terms of assembly, homodimer.

The protein resides in the cytoplasm. It localises to the nucleoid. In terms of biological role, binds to DNA and alters its conformation. May be involved in regulation of gene expression, nucleoid organization and DNA protection. The chain is Nucleoid-associated protein amb4104 from Paramagnetospirillum magneticum (strain ATCC 700264 / AMB-1) (Magnetospirillum magneticum).